The following is a 297-amino-acid chain: Pantothenate synthetase (297 aa).

Residue 30–37 participates in ATP binding; it reads MGYLHAGH. Catalysis depends on histidine 37, which acts as the Proton donor. Glutamine 61 contacts (R)-pantoate. A beta-alanine-binding site is contributed by glutamine 61. 147-150 serves as a coordination point for ATP; sequence GEKD. Glutamine 153 is a (R)-pantoate binding site. ATP is bound by residues valine 176 and 184 to 187; that span reads LSSR.

The protein belongs to the pantothenate synthetase family. As to quaternary structure, homodimer.

The protein localises to the cytoplasm. The catalysed reaction is (R)-pantoate + beta-alanine + ATP = (R)-pantothenate + AMP + diphosphate + H(+). It participates in cofactor biosynthesis; (R)-pantothenate biosynthesis; (R)-pantothenate from (R)-pantoate and beta-alanine: step 1/1. In terms of biological role, catalyzes the condensation of pantoate with beta-alanine in an ATP-dependent reaction via a pantoyl-adenylate intermediate. The chain is Pantothenate synthetase from Rhizobium etli (strain ATCC 51251 / DSM 11541 / JCM 21823 / NBRC 15573 / CFN 42).